Reading from the N-terminus, the 304-residue chain is Glutaminase (304 aa).

7 residues coordinate substrate: serine 63, asparagine 114, glutamate 158, asparagine 165, tyrosine 189, tyrosine 240, and valine 258.

Belongs to the glutaminase family. As to quaternary structure, homotetramer.

The catalysed reaction is L-glutamine + H2O = L-glutamate + NH4(+). In Shewanella oneidensis (strain ATCC 700550 / JCM 31522 / CIP 106686 / LMG 19005 / NCIMB 14063 / MR-1), this protein is Glutaminase.